The following is a 1080-amino-acid chain: DNA-directed RNA polymerase subunit beta (1080 aa).

Belongs to the RNA polymerase beta chain family. As to quaternary structure, in plastids the minimal PEP RNA polymerase catalytic core is composed of four subunits: alpha, beta, beta', and beta''. When a (nuclear-encoded) sigma factor is associated with the core the holoenzyme is formed, which can initiate transcription.

It localises to the plastid. The protein localises to the chloroplast. It carries out the reaction RNA(n) + a ribonucleoside 5'-triphosphate = RNA(n+1) + diphosphate. In terms of biological role, DNA-dependent RNA polymerase catalyzes the transcription of DNA into RNA using the four ribonucleoside triphosphates as substrates. This chain is DNA-directed RNA polymerase subunit beta, found in Mesostigma viride (Green alga).